The chain runs to 718 residues: Telomeric repeat-binding factor 2 (718 aa).

Disordered stretches follow at residues Met-1 to Asp-22 and Asn-219 to Glu-286. 2 stretches are compositionally biased toward basic and acidic residues: residues Ala-8–Asp-22 and Asn-219–Arg-228. Residues Glu-24–Ser-220 are TRFH dimerization. 15 consecutive repeat copies span residues Gly-257 to Ala-269, Gly-270 to Thr-282, Gly-283 to Val-295, Arg-296 to Gln-308, Gly-309 to Met-321, Gly-322 to Leu-334, Gly-335 to Val-347, Arg-348 to Val-360, Gly-361 to Ala-373, Arg-374 to Pro-386, Gly-387 to Val-399, Arg-400 to Val-412, Arg-413 to Val-425, Arg-426 to Ala-438, and Gly-439 to Thr-451. A 15 X 13 AA approximate tandem repeats region spans residues Gly-257–Thr-451. Disordered stretches follow at residues Thr-342–Pro-455 and Phe-524–Glu-641. Residues Ala-405 to Val-425 are compositionally biased toward basic and acidic residues. Positions Pro-533 to Ser-543 are enriched in polar residues. The short motif at Arg-545–Lys-550 is the Nuclear localization signal element. Low complexity predominate over residues Ser-584–Ser-595. Over residues Pro-615 to Tyr-630 the composition is skewed to polar residues. In terms of domain architecture, HTH myb-type spans Lys-664–Ile-717. Positions Trp-688–Lys-713 form a DNA-binding region, H-T-H motif.

As to quaternary structure, homodimer. Component of the shelterin complex (telosome). Interacts with TERF2IP/RAP1. Highly expressed in embryo.

The protein localises to the nucleus. The protein resides in the chromosome. Its subcellular location is the telomere. Functionally, binds the telomeric double-stranded 5'-TTAGGG-3' repeat and plays a central role in telomere maintenance and protection against end-to-end fusion of chromosomes. In addition to its telomeric DNA-binding role, required to recruit a number of factors and enzymes required for telomere protection, including the shelterin complex, TERF2IP/RAP1 and DCLRE1B/Apollo. Component of the shelterin complex (telosome) that is involved in the regulation of telomere length and protection. Shelterin associates with arrays of double-stranded 5'-TTAGGG-3' repeats added by telomerase and protects chromosome ends; without its protective activity, telomeres are no longer hidden from the DNA damage surveillance and chromosome ends are inappropriately processed by DNA repair pathways. Together with DCLRE1B/Apollo, plays a key role in telomeric loop (T loop) formation by generating 3' single-stranded overhang at the leading end telomeres: T loops have been proposed to protect chromosome ends from degradation and repair. Required both to recruit DCLRE1B/Apollo to telomeres and activate the exonuclease activity of DCLRE1B/Apollo. Together with DCLRE1B/Apollo, required to control the amount of DNA topoisomerase (TOP1, TOP2A and TOP2B) needed for telomere replication during fork passage and prevent aberrant telomere topology. Recruits TERF2IP/RAP1 to telomeres, thereby participating in to repressing homology-directed repair (HDR), which can affect telomere length. This chain is Telomeric repeat-binding factor 2 (TERF2), found in Gallus gallus (Chicken).